The sequence spans 1778 residues: MKKKFSIVIISVLLLGYLAPFDTLLVGADETTVSEDTAVKTAEADSATEGIESETGSDDETAEEPKEAKEAEASKETTEKEEKAKTEEPASNIKTEINTDKSQLKQTSLKAAVPAGSTYNSLFPDDNLAKKLAVIITGNAAATGNESVDSAALLAISQLDLSGETGNDPTDISNIEGLQYLENLTSLNLSENNISDLAPLKDLVNLVSLNLSSNRTLVNLSGVEDLVNLQELNVSANKALEDISQVASLPVLKEISAQGCNIKTLELKNPAGAVLPELETFYLQENDLTNLTSLAKLPKLKNLYIKGNASLKSLETLNGATKLQLIDASNCTDLETLGDISGLSELEMIQLSGCSKLKEITSLKNLPNLVNITADSCAIEDLGTLNNLPKLQTLVLSDNENLTNITAITDLPQLKTLTLDGCGITSIGTLDNLPKLEKLDLKENQITSISEITDLPRLSYLDVSVNNLTTIGDLKKLPLLEWLNVSSNRLSDVSTLTNFPSLNYINISNNVIRTVGKMTELPSLKEFYAQNNSISDISMIHDMPNLRKVDASNNLITNIGTFDNLPKLQSLDVHSNRITSTSVIHDLPSLETFNAQTNLITNIGTMDNLPDLTYVNLSFNRIPSLAPIGDLPNLETLIVSDNNSYLRSLGTMDGVPKLRILDLQNNYLNYTGTEGNLSSLSDLTNLTELNLRNNVYIDDISGLSTLSRLIYLNLDSNKIEDISALSNLTNLQELTLENNKIENISALSDLENLNKLVVSKNKIIDISPVANMVNRGAIVTASNQTYTLPTVLSYQSSFTIDNPVIWYDGTLLAPSSIGNSGNYKDGKITWTNMTATSSSTLFNFNRLKDGLTFSGTVTQPYKSAAKVTADAEQTYTIGDTISEEQFLKDVNAKSSDGAPVTSDFATVVDLNTFGEYEVTLTSEKDGIQGDSCKVIVKVLHGAPVISADQTISYDKHATITEKQFLEDIHASTDLDTAITTNFSTAVNLNKGGDYTVALNSENEDGVKAETVYVTVTVNKDPAPIISAKTEITYDKFSKKTEAAFLDDIDADTNDGSIVTSNFATAVNLDKAGDYTVTLNSINSDGVAGTPTAIIVHVEKEKIATISTNTAQQYEKYAKINETQFLKDVHASINASPTTAVLESDFETVVKLDVPGTYTVTITATNEDGGVSAPKEVSVIVRKIPAPEITADKEITYPKFDEVSEAEFLNDIHATISDKNVAITSNFSTDVNLNKAGDYTVTLNATNEDGVKATPVEVIVHVQQGERPVITADATISYDKFANITEAKFLEDIHATSSDGQSSTVITSNFQTATNFKTAMSYTVTLNAVNEDGISAEPVAVTVTINKEPAAALKADAEVSYAKNEAVTESDFFKDVHLEGTEAPSTAKATSNFDSVVDRSKTGDYTVTINATNEDGAVSTPIEVIVHIEAESAPVITANAEVKYNKHEQTDERRFLYDSEAKIDEANVEIKTDFAEKVDINKVGTYTVTLTATNEDGQAANPVEVSVIVSDAAAEKVNVKYVDENGSEISAAETLTGNLDETFSIDAKSIAGYKCDATLSGVFSTVEQTVVFHYKAIKPGVVTIKYEDTNGKAVDEDKQITGEVGDDFEAEAQTVSGYSCRAIASGKITEEPQTITFTYSTATPSKKSGEITVQYVDESGKKLADSKKVTGNIDDSYSVEAKAIEGYSVVGDDSAKGVFTEKSQTVTFKYKKNTQVSKDDPKVKGKTNQPSSTDTKLKVDNNSLPATGDTENMILAVLIGFNMLIVASIFLFRKPKTNQ.

Positions Met1–Ala28 are cleaved as a signal peptide. The interval Asp36–Lys101 is disordered. The span at Ile51–Ala62 shows a compositional bias: acidic residues. Over residues Glu63–Glu88 the composition is skewed to basic and acidic residues. LRR repeat units follow at residues Ala155–Gln179, Asn183–Val204, Asn205–Val227, Asn228–Pro250, Val251–Gly272, Glu277–Pro298, Lys299–Thr321, Lys322–Ser344, Glu345–Pro367, Asn368–Pro389, Lys390–Pro412, Gln413–Pro434, Lys435–Pro456, Arg457–Pro478, Leu479–Pro500, Ser501–Pro522, Ser523–Pro544, Asn545–Pro566, Lys567–Pro588, Ser589–Pro610, Asp611–Pro632, Asn633–Asp653, Lys657–Ser678, Asn685–Ser707, Arg708–Thr729, Asn730–Glu751, and Asn752–Val773. One can recognise an LRRCT domain in the interval Thr785–Glu872. 3 MucBP domains span residues Asp1510 to Val1569, Ala1575 to Ile1634, and Ser1644 to Val1705. The tract at residues Ser1716–Ser1742 is disordered. Over residues Lys1725–Ser1742 the composition is skewed to polar residues. Positions Leu1743–Gly1747 match the LPXTG sorting signal motif. At Thr1746 the chain carries Pentaglycyl murein peptidoglycan amidated threonine. Positions Gly1747 to Gln1778 are cleaved as a propeptide — removed by sortase.

The protein belongs to the internalin family.

It is found in the secreted. It localises to the cell wall. A role in virulence could not be demonstrated. The sequence is that of Internalin I (inlI) from Listeria monocytogenes serovar 1/2a (strain ATCC BAA-679 / EGD-e).